The following is a 199-amino-acid chain: Holliday junction branch migration complex subunit RuvA (199 aa).

The tract at residues 1–62 (MIAYIKGLLA…EDGIQFFGFA (62 aa)) is domain I. Residues 63–141 (KEDEKECFLL…GMAAVEHSTL (79 aa)) are domain II. The flexible linker stretch occupies residues 142-152 (QQSVITTGSGD). The segment at 152 to 199 (DEAVEALLALGYSQGEARDAVKKAQKSAPEEDLSALIKIALKELAPSR) is domain III.

This sequence belongs to the RuvA family. As to quaternary structure, homotetramer. Forms an RuvA(8)-RuvB(12)-Holliday junction (HJ) complex. HJ DNA is sandwiched between 2 RuvA tetramers; dsDNA enters through RuvA and exits via RuvB. An RuvB hexamer assembles on each DNA strand where it exits the tetramer. Each RuvB hexamer is contacted by two RuvA subunits (via domain III) on 2 adjacent RuvB subunits; this complex drives branch migration. In the full resolvosome a probable DNA-RuvA(4)-RuvB(12)-RuvC(2) complex forms which resolves the HJ.

It is found in the cytoplasm. In terms of biological role, the RuvA-RuvB-RuvC complex processes Holliday junction (HJ) DNA during genetic recombination and DNA repair, while the RuvA-RuvB complex plays an important role in the rescue of blocked DNA replication forks via replication fork reversal (RFR). RuvA specifically binds to HJ cruciform DNA, conferring on it an open structure. The RuvB hexamer acts as an ATP-dependent pump, pulling dsDNA into and through the RuvAB complex. HJ branch migration allows RuvC to scan DNA until it finds its consensus sequence, where it cleaves and resolves the cruciform DNA. The polypeptide is Holliday junction branch migration complex subunit RuvA (Desulforamulus reducens (strain ATCC BAA-1160 / DSM 100696 / MI-1) (Desulfotomaculum reducens)).